We begin with the raw amino-acid sequence, 726 residues long: Sensory/regulatory protein RpfC (726 aa).

At 1 to 22 (MKSPLPWLKRRLSGRADSEHAQ) the chain is on the periplasmic side. The tract at residues 1-22 (MKSPLPWLKRRLSGRADSEHAQ) is sensor. The chain crosses the membrane as a helical span at residues 23-40 (NLIRIIITTLFISYLGWR). Topologically, residues 41 to 51 (YQHTHGDTLMA) are cytoplasmic. A helical membrane pass occupies residues 52–72 (TWLILVGELLVSLGLMVAILL). Residues 73–94 (RPQVSHTRRLIGMLLDYTCTGA) lie on the Periplasmic side of the membrane. A helical membrane pass occupies residues 95 to 115 (IMAIQGEPASPLYAVCMWVTI). Over 116–127 (GNGLRYGSNYLR) the chain is Cytoplasmic. Residues 128 to 148 (AATAMGSLCFLGAILISPYWK) traverse the membrane as a helical segment. Topologically, residues 149–151 (ANP) are periplasmic. A helical membrane pass occupies residues 152 to 172 (YLSWGLLLGLIAVPLYFDSLL). The Cytoplasmic segment spans residues 173–726 (RAMTRAVREA…DGECSPRSNE (554 aa)). The Histidine kinase domain occupies 195–417 (NMSHEFRTPL…VFWFELPMAI (223 aa)). His-198 carries the phosphohistidine; by autocatalysis modification. In terms of domain architecture, Response regulatory spans 463 to 581 (RMLVADDHEA…KLLDTLADLA (119 aa)). At Asp-512 the chain carries 4-aspartylphosphate. Positions 618-711 (GEEFERQFVR…KAGKDALDAR (94 aa)) constitute an HPt domain. A Phosphohistidine modification is found at His-657.

At low DSF concentrations, interacts with RpfF. In terms of processing, autophosphorylated. Activation may require a sequential transfer of a phosphate group from a His in the primary transmitter domain, to an Asp in the receiver domain and to a His in the secondary transmitter domain.

It localises to the cell inner membrane. It carries out the reaction ATP + protein L-histidine = ADP + protein N-phospho-L-histidine.. With respect to regulation, binding of DSF to the sensor region causes allosteric change, which facilitates RpfC autophosphorylation. Functionally, hybrid sensor kinase that regulates diverse biological functions through two distinct molecular mechanisms. At low cell density, the extracellular concentration of the diffusible signaling factor (DSF) is below a threshold, and unphosphorylated RpfC is involved in the negative regulation of DSF synthesis, via direct interaction with the DSF synthase RpfF. Interaction prevents synthesis of DSF, which remains at a basal level. This activity does not involve the phosphorelay mechanism and is not dependent on RpfG. Is also member of the two-component regulatory system RpfG/RpfC, which is involved in the perception and response to DSF, which is essential for cell-cell signaling. At high cell density, the level of extracellular DSF increases and binding of DSF to the sensor region of RpfC causes autophosphorylation of RpfC, which results in the release of RpfF and the activation of RpfG via a four-step phosphorelay. Activation of RpfG leads to the positive regulation of biofilm dispersal and the production of virulence factors. The polypeptide is Sensory/regulatory protein RpfC (rpfC) (Xanthomonas campestris pv. campestris (strain 8004)).